The following is a 325-amino-acid chain: 1-aminocyclopropane-1-carboxylate oxidase 2 (325 aa).

In terms of domain architecture, Fe2OG dioxygenase spans 157 to 257 (PTFGTKVSNY…RMSIASFYNP (101 aa)). Residues His-181, Asp-183, and His-238 each coordinate Fe cation.

It belongs to the iron/ascorbate-dependent oxidoreductase family. Fe cation is required as a cofactor.

It carries out the reaction 1-aminocyclopropane-1-carboxylate + L-ascorbate + O2 = ethene + L-dehydroascorbate + hydrogen cyanide + CO2 + 2 H2O. It participates in alkene biosynthesis; ethylene biosynthesis via S-adenosyl-L-methionine; ethylene from S-adenosyl-L-methionine: step 2/2. In Doritaenopsis sp. (Moth orchid), this protein is 1-aminocyclopropane-1-carboxylate oxidase 2 (ACO2).